The chain runs to 580 residues: 9,13-epoxylabda-14-ene synthase, chloroplastic (580 aa).

Residues 1-32 (MSITFNLKIAPFSGPGIQRSKETFPATEIQIT) constitute a chloroplast transit peptide. D322, D326, N466, T470, and E474 together coordinate Mg(2+). A DDXXD motif motif is present at residues 322–326 (DDFFD).

Belongs to the terpene synthase family. It depends on Mg(2+) as a cofactor. In terms of tissue distribution, present in both leaves and flowers, with higher levels in leaves.

The protein localises to the plastid. The protein resides in the chloroplast. It carries out the reaction peregrinol diphosphate = (13R)-9,13-epoxylabd-14-ene + diphosphate. It catalyses the reaction (+)-copalyl diphosphate = miltiradiene + diphosphate. The catalysed reaction is 8-hydroxycopalyl diphosphate = (13R)-manoyl oxide + diphosphate. It participates in secondary metabolite biosynthesis; terpenoid biosynthesis. In terms of biological role, involved in the biosynthesis of labdane-type diterpenoid including marrubiin and other labdane-related furanoid diterpenoids with potential applications as anti-diabetics, analgesics or vasorelaxants. Terpene synthase the catalyzes the conversion of peregrinol diphosphate to 9,13(R)-epoxy-labd-14-ene, from (+)-copalyl diphosphate ((+)-CPP) to miltiradiene and from 8-hydroxycopalyl diphosphate (LPP, labda-13-en-8-ol diphosphate) to manoyl oxide. The sequence is that of 9,13-epoxylabda-14-ene synthase, chloroplastic from Marrubium vulgare (White horehound).